The sequence spans 217 residues: Pyridoxine/pyridoxamine 5'-phosphate oxidase (217 aa).

Substrate contacts are provided by residues 14-17 (RKSY) and Lys72. FMN contacts are provided by residues 67-72 (RVVLIK), 82-83 (YT), Arg88, and Lys89. Tyr129, Arg133, and Ser137 together coordinate substrate. Residues 146-147 (QS) and Trp190 each bind FMN. 196-198 (RLH) lines the substrate pocket. Residue Arg200 coordinates FMN.

The protein belongs to the pyridoxamine 5'-phosphate oxidase family. Homodimer. Requires FMN as cofactor.

It carries out the reaction pyridoxamine 5'-phosphate + O2 + H2O = pyridoxal 5'-phosphate + H2O2 + NH4(+). The enzyme catalyses pyridoxine 5'-phosphate + O2 = pyridoxal 5'-phosphate + H2O2. It participates in cofactor metabolism; pyridoxal 5'-phosphate salvage; pyridoxal 5'-phosphate from pyridoxamine 5'-phosphate: step 1/1. The protein operates within cofactor metabolism; pyridoxal 5'-phosphate salvage; pyridoxal 5'-phosphate from pyridoxine 5'-phosphate: step 1/1. Functionally, catalyzes the oxidation of either pyridoxine 5'-phosphate (PNP) or pyridoxamine 5'-phosphate (PMP) into pyridoxal 5'-phosphate (PLP). This is Pyridoxine/pyridoxamine 5'-phosphate oxidase from Acidovorax sp. (strain JS42).